The sequence spans 246 residues: MAGHSKWANTKHRKAAQDAKRGKIFTKIIRELVTAARLGGGDPASNPRLRAAVDKALSNNMTRDTLNRAIARGVGGDEDANMETIIYEGYGPGGTAVMVECLSDNRNRTVAEVRHAFTKTGGNLGTDGSVSYLFSKKGVISFEKGDEDTIMEAALEAGAEDVVTYDDGAIDVYTAWEEMGAVRDALEAAGLKADAAEVSMIPSTKADMDAETAPKLLRLIDMLEDCDDVQEVYHNGEISDEVAATL.

Belongs to the TACO1 family.

The protein resides in the cytoplasm. This is Probable transcriptional regulatory protein KPK_1906 from Klebsiella pneumoniae (strain 342).